The primary structure comprises 393 residues: 2-methylcitrate synthase (393 aa).

Substrate-binding residues include R92 and H207. Residue H242 is part of the active site. 275–279 is a CoA binding site; that stretch reads KIMGF. The active site involves H281. R290 contributes to the substrate binding site. D332 is a catalytic residue. Substrate-binding residues include R357 and R376.

Belongs to the citrate synthase family. In terms of assembly, homodimer.

It catalyses the reaction propanoyl-CoA + oxaloacetate + H2O = (2S,3S)-2-methylcitrate + CoA + H(+). The enzyme catalyses oxaloacetate + acetyl-CoA + H2O = citrate + CoA + H(+). Its pathway is organic acid metabolism; propanoate degradation. It participates in carbohydrate metabolism; tricarboxylic acid cycle; isocitrate from oxaloacetate: step 1/2. In terms of biological role, involved in the catabolism of short chain fatty acids (SCFA) via the tricarboxylic acid (TCA)(acetyl degradation route) and via the 2-methylcitrate cycle I (propionate degradation route). Catalyzes the Claisen condensation of propionyl-CoA and oxaloacetate (OAA) to yield 2-methylcitrate (2-MC) and CoA. Also catalyzes the condensation of oxaloacetate with acetyl-CoA. The protein is 2-methylcitrate synthase (gltA1) of Mycobacterium tuberculosis (strain ATCC 35801 / TMC 107 / Erdman).